The chain runs to 260 residues: UPF0246 protein APP7_0648 (260 aa).

Belongs to the UPF0246 family.

This is UPF0246 protein APP7_0648 from Actinobacillus pleuropneumoniae serotype 7 (strain AP76).